A 323-amino-acid polypeptide reads, in one-letter code: Thioredoxin reductase (323 aa).

42–49 (YRAEADGA) serves as a coordination point for FAD. Cysteines 143 and 146 form a disulfide. Residue 286–295 (DVLCNEVKQA) participates in FAD binding.

This sequence belongs to the class-II pyridine nucleotide-disulfide oxidoreductase family. As to quaternary structure, homodimer. The cofactor is FAD.

It is found in the cytoplasm. It catalyses the reaction [thioredoxin]-dithiol + NADP(+) = [thioredoxin]-disulfide + NADPH + H(+). The polypeptide is Thioredoxin reductase (trxB) (Aquifex aeolicus (strain VF5)).